Reading from the N-terminus, the 296-residue chain is Alpha/beta-gliadin clone PW1215 (296 aa).

Positions 1–20 are cleaved as a signal peptide; that stretch reads MKTFLILALLAIVATTATTA. Disordered regions lie at residues 24–126 and 220–255; these read PVPQ…QAQQ and SSQV…VQPQ. Residues 25-36 show a composition bias toward pro residues; the sequence is VPQPQPQNPSQP. Residues 37-58 are compositionally biased toward low complexity; that stretch reads QPQGQVPLVQQQQFPGQQQQFP. Composition is skewed to pro residues over residues 59–71 and 81–116; these read PQQP…PFPS and FPQP…PQPQ. Low complexity-rich tracts occupy residues 117 to 126 and 220 to 241; these read QPISQQQAQQ and SSQV…FFQP. The segment covering 242–255 has biased composition (polar residues); it reads SQQNPQAQGSVQPQ.

Belongs to the gliadin/glutenin family. Post-translationally, substrate of transglutaminase.

Gliadin is the major seed storage protein in wheat. In Triticum aestivum (Wheat), this protein is Alpha/beta-gliadin clone PW1215.